Consider the following 272-residue polypeptide: ATP synthase subunit a (272 aa).

5 consecutive transmembrane segments (helical) span residues 41-61 (VLNI…LVLF), 101-121 (VIAP…FMDL), 147-167 (DVNI…FYSI), 221-241 (LIFI…LSVP), and 243-263 (AIFH…LTIV).

Belongs to the ATPase A chain family. As to quaternary structure, F-type ATPases have 2 components, CF(1) - the catalytic core - and CF(0) - the membrane proton channel. CF(1) has five subunits: alpha(3), beta(3), gamma(1), delta(1), epsilon(1). CF(0) has three main subunits: a(1), b(2) and c(9-12). The alpha and beta chains form an alternating ring which encloses part of the gamma chain. CF(1) is attached to CF(0) by a central stalk formed by the gamma and epsilon chains, while a peripheral stalk is formed by the delta and b chains.

It localises to the cell inner membrane. Key component of the proton channel; it plays a direct role in the translocation of protons across the membrane. This chain is ATP synthase subunit a, found in Erwinia tasmaniensis (strain DSM 17950 / CFBP 7177 / CIP 109463 / NCPPB 4357 / Et1/99).